The chain runs to 284 residues: MEMO1 family protein STK_20620 (284 aa).

This sequence belongs to the MEMO1 family.

This is MEMO1 family protein STK_20620 from Sulfurisphaera tokodaii (strain DSM 16993 / JCM 10545 / NBRC 100140 / 7) (Sulfolobus tokodaii).